The sequence spans 302 residues: Heme A synthase (302 aa).

At 1–8 the chain is on the cytoplasmic side; sequence MFRKQNLK. Residues 9-29 traverse the membrane as a helical segment; that stretch reads WLGVLATIIMTFVQLGGALVT. The Extracellular segment spans residues 30 to 67; it reads KTGSEDGCGSSWPLCNGALLPENLPIQTIIELSHRAVS. The cysteines at positions 37 and 44 are disulfide-linked. E60 is an active-site residue. H63 is a binding site for heme o. Residues 68–88 form a helical membrane-spanning segment; that stretch reads AISLIVVLWLVITAWKNIGYI. Residues 89–93 are Cytoplasmic-facing; that stretch reads KEIKP. Residues 94–114 form a helical membrane-spanning segment; sequence LSIISVGFLLVQALVGAAAVI. At 115 to 125 the chain is on the extracellular side; it reads WQQNPYVLALH. Residue H125 coordinates heme o. A helical membrane pass occupies residues 126–146; the sequence is FGISLISFSSVFLMTLIIFSI. Topologically, residues 147–161 are cytoplasmic; it reads DKKYEADILFIHKPL. A helical transmembrane segment spans residues 162-182; it reads RILTWLMAIIVYLTIYTGALV. Topologically, residues 183-215 are extracellular; the sequence is RHTKSSLAYGAWPIPFDDIVPHNAHDWVQFSHR. Position 214 (H214) interacts with heme b. Residues 216 to 236 traverse the membrane as a helical segment; that stretch reads GMAFITFIWIMITFIHAIKNY. The Cytoplasmic segment spans residues 237–244; it reads SDNRTVRY. The helical transmembrane segment at 245 to 265 threads the bilayer; sequence GYTASFILVILQVITGALSVI. Over 266-270 the chain is Extracellular; it reads TNVNL. Residues 271-291 traverse the membrane as a helical segment; it reads IIALFHALFITYLFGMIAYFI. Residue H276 participates in heme b binding. Residues 292–302 are Cytoplasmic-facing; it reads LLMLRTTRSLK.

The protein belongs to the COX15/CtaA family. Type 1 subfamily. As to quaternary structure, interacts with CtaB. Heme b is required as a cofactor.

It is found in the cell membrane. It catalyses the reaction Fe(II)-heme o + 2 A + H2O = Fe(II)-heme a + 2 AH2. It participates in porphyrin-containing compound metabolism; heme A biosynthesis; heme A from heme O: step 1/1. Its function is as follows. Catalyzes the conversion of heme O to heme A by two successive hydroxylations of the methyl group at C8. The first hydroxylation forms heme I, the second hydroxylation results in an unstable dihydroxymethyl group, which spontaneously dehydrates, resulting in the formyl group of heme A. The protein is Heme A synthase of Staphylococcus epidermidis (strain ATCC 12228 / FDA PCI 1200).